The sequence spans 310 residues: Carbamate kinase (310 aa).

Belongs to the carbamate kinase family. As to quaternary structure, homodimer.

It is found in the cytoplasm. It catalyses the reaction hydrogencarbonate + NH4(+) + ATP = carbamoyl phosphate + ADP + H2O + H(+). It functions in the pathway amino-acid degradation; L-arginine degradation via ADI pathway. The chain is Carbamate kinase from Haemophilus influenzae (strain ATCC 51907 / DSM 11121 / KW20 / Rd).